A 438-amino-acid polypeptide reads, in one-letter code: UDP-N-acetylmuramoylalanine--D-glutamate ligase (438 aa).

112 to 118 (GSNGKST) serves as a coordination point for ATP.

This sequence belongs to the MurCDEF family.

Its subcellular location is the cytoplasm. The catalysed reaction is UDP-N-acetyl-alpha-D-muramoyl-L-alanine + D-glutamate + ATP = UDP-N-acetyl-alpha-D-muramoyl-L-alanyl-D-glutamate + ADP + phosphate + H(+). The protein operates within cell wall biogenesis; peptidoglycan biosynthesis. Functionally, cell wall formation. Catalyzes the addition of glutamate to the nucleotide precursor UDP-N-acetylmuramoyl-L-alanine (UMA). The chain is UDP-N-acetylmuramoylalanine--D-glutamate ligase from Shigella dysenteriae serotype 1 (strain Sd197).